We begin with the raw amino-acid sequence, 584 residues long: uncharacterized protein (584 aa).

Over residues 353 to 375 the composition is skewed to polar residues; that stretch reads NSEGQTNAETSLNGKGTVGNQWA. Disordered stretches follow at residues 353–379, 400–426, and 463–565; these read NSEG…SPPE, LESK…VSSH, and SVDS…CNSG. The span at 502-511 shows a compositional bias: polar residues; the sequence is KANSPASSRL. Residues 516-535 are compositionally biased toward basic and acidic residues; it reads DSSHLSKHVNFDKNPDHSEA.

This is an uncharacterized protein from Mus musculus (Mouse).